The following is a 382-amino-acid chain: tRNA (guanine(26)-N(2))-dimethyltransferase (382 aa).

In terms of domain architecture, Trm1 methyltransferase spans 4–373 (VEIIEGKARI…KNLDEIKECI (370 aa)). S-adenosyl-L-methionine contacts are provided by arginine 44, arginine 69, and aspartate 87. Zn(2+) is bound by residues cysteine 246, cysteine 249, cysteine 263, and cysteine 266.

Belongs to the class I-like SAM-binding methyltransferase superfamily. Trm1 family.

It catalyses the reaction guanosine(26) in tRNA + 2 S-adenosyl-L-methionine = N(2)-dimethylguanosine(26) in tRNA + 2 S-adenosyl-L-homocysteine + 2 H(+). Functionally, dimethylates a single guanine residue at position 26 of a number of tRNAs using S-adenosyl-L-methionine as donor of the methyl groups. In Sulfolobus acidocaldarius (strain ATCC 33909 / DSM 639 / JCM 8929 / NBRC 15157 / NCIMB 11770), this protein is tRNA (guanine(26)-N(2))-dimethyltransferase.